The following is a 325-amino-acid chain: Neural proliferation differentiation and control protein 1 (325 aa).

The N-terminal stretch at 1–34 (MATPLPPPSPRHLRLLRLLLSGLVLGAALRGAAA) is a signal peptide. The disordered stretch occupies residues 138–175 (QGLELGLPSTPGTPTPTPHTSLGSPVSSDPVHMSPLEP). Residues 182-202 (GLALVLILAFCVAGAAALSVA) traverse the membrane as a helical segment. The residue at position 229 (Ser229) is a Phosphoserine. Residues 266-290 (EPPKELDTASSDEENEDGDFTVYEC) form a disordered region. Acidic residues predominate over residues 275–284 (SSDEENEDGD).

This sequence belongs to the NPDC1/cab-1 family. Strongly expressed in adult brain; especially in hippocampus, frontal lobe and temporal lobe.

It is found in the membrane. In terms of biological role, suppresses oncogenic transformation in neural and non-neural cells and down-regulates neural cell proliferation. Might be involved in transcriptional regulation. The chain is Neural proliferation differentiation and control protein 1 (NPDC1) from Homo sapiens (Human).